A 253-amino-acid chain; its full sequence is Probable transcriptional regulatory protein A1G_04400 (253 aa).

Positions 1–21 are disordered; it reads MAGHSKFKNIQHRKGAQDKKR.

This sequence belongs to the TACO1 family.

Its subcellular location is the cytoplasm. This chain is Probable transcriptional regulatory protein A1G_04400, found in Rickettsia rickettsii (strain Sheila Smith).